A 409-amino-acid polypeptide reads, in one-letter code: MNIFDNILSSATIFKNRDVLRHSYTPEKLPHREEQINQLALLLSPMLRGGTPSNIFIYGKTGTGKTATVLFVARQLEEASRKAKLNVAVHYINCEIVDTAYRVLASLARKFGSNVPMTGWPTDQVYEEVKKALERRGTRVVVILDEIDKLVKKAEEALYGLTRINSELENSSICIVGISNNLKFKEYLDARILSSLSEEEIVFPPYNAEQLEDILQQRAKLAFEDGVLEDGVIQLCAAIAAQEHGDARKALDLLRVSAEIAERERDSMVRVEHVKKAVRKIETDYMIETVRTLPVHSKILLYSMSLISENSPKFTTGEVYCVYKKLCGKVGVDPLTQRRISDLISELDMLGILNSVVISKGRYGRTREMKLEADEKVLRKALEEDYRLQNLRKFEGELKKLANLNLFQF.

Residues T63 to A67, Y206, and R218 each bind ATP.

This sequence belongs to the CDC6/cdc18 family.

Its function is as follows. Involved in regulation of DNA replication. This Archaeoglobus fulgidus (strain ATCC 49558 / DSM 4304 / JCM 9628 / NBRC 100126 / VC-16) protein is ORC1-type DNA replication protein 1 (cdc6-1).